The following is a 244-amino-acid chain: Carboxy-S-adenosyl-L-methionine synthase (244 aa).

S-adenosyl-L-methionine is bound by residues Tyr-40, 65-67, 90-91, Asn-134, and Arg-201; these read GCS and DN.

Belongs to the class I-like SAM-binding methyltransferase superfamily. Cx-SAM synthase family. Homodimer.

It carries out the reaction prephenate + S-adenosyl-L-methionine = carboxy-S-adenosyl-L-methionine + 3-phenylpyruvate + H2O. Catalyzes the conversion of S-adenosyl-L-methionine (SAM) to carboxy-S-adenosyl-L-methionine (Cx-SAM). This chain is Carboxy-S-adenosyl-L-methionine synthase, found in Citrifermentans bemidjiense (strain ATCC BAA-1014 / DSM 16622 / JCM 12645 / Bem) (Geobacter bemidjiensis).